Consider the following 313-residue polypeptide: Ribosomal RNA small subunit methyltransferase H (313 aa).

S-adenosyl-L-methionine is bound by residues 35 to 37 (GGH), Asp-55, Phe-79, Asp-101, and Gln-108.

The protein belongs to the methyltransferase superfamily. RsmH family.

Its subcellular location is the cytoplasm. The catalysed reaction is cytidine(1402) in 16S rRNA + S-adenosyl-L-methionine = N(4)-methylcytidine(1402) in 16S rRNA + S-adenosyl-L-homocysteine + H(+). Functionally, specifically methylates the N4 position of cytidine in position 1402 (C1402) of 16S rRNA. In Salmonella paratyphi A (strain ATCC 9150 / SARB42), this protein is Ribosomal RNA small subunit methyltransferase H.